Reading from the N-terminus, the 622-residue chain is Modification methylase LlaI (622 aa).

It belongs to the N(4)/N(6)-methyltransferase family.

It carries out the reaction a 2'-deoxyadenosine in DNA + S-adenosyl-L-methionine = an N(6)-methyl-2'-deoxyadenosine in DNA + S-adenosyl-L-homocysteine + H(+). An alpha subtype methylase that modifies unknown specific adenine residues, and protects the DNA from cleavage by the LlaI endonuclease. The chain is Modification methylase LlaI from Lactococcus lactis subsp. lactis (Streptococcus lactis).